The sequence spans 217 residues: Large ribosomal subunit protein uL3 (217 aa).

The interval 127-162 (GFSRGPMSHGSKNHRAPGSTGAGTTPGRIYPGKRMA) is disordered. Residues 142–153 (APGSTGAGTTPG) show a composition bias toward low complexity.

Belongs to the universal ribosomal protein uL3 family. In terms of assembly, part of the 50S ribosomal subunit. Forms a cluster with proteins L14 and L19.

Its function is as follows. One of the primary rRNA binding proteins, it binds directly near the 3'-end of the 23S rRNA, where it nucleates assembly of the 50S subunit. This chain is Large ribosomal subunit protein uL3, found in Prochlorococcus marinus (strain MIT 9312).